Reading from the N-terminus, the 1704-residue chain is Vitellogenin-1 (1704 aa).

Residues 1 to 14 form the signal peptide; sequence MKAVVLALTLAFVA. The region spanning 22–660 is the Vitellogenin domain; it reads FAAGKTYVYK…DAATFMPKSF (639 aa). 16 N-linked (GlcNAc...) asparagine glycosylation sites follow: N446, N635, N903, N908, N1019, N1054, N1080, N1121, N1174, N1285, N1322, N1375, N1379, N1405, N1456, and N1512. The span at 1078–1109 shows a compositional bias: low complexity; the sequence is RRNSSSSSSSSSSSSSESRSSRSSSSSSSSSR. Residues 1078–1213 form a disordered region; sequence RRNSSSSSSS…SSDRRSKEVM (136 aa). Residues 1122–1204 are compositionally biased toward low complexity; the sequence is SSSSSSSRRS…FSDSSSSSSS (83 aa). A VWFD domain is found at 1442–1617; the sequence is AECSFVEDTL…SWILPAESCR (176 aa). 2 cysteine pairs are disulfide-bonded: C1444-C1580 and C1467-C1616.

Phosvitin, an egg yolk storage protein, is one of the most highly phosphorylated (10%) proteins in nature. Post-translationally, the N-terminal of the blood vitellogenin is blocked. As to expression, produced by the liver, secreted into the blood and then sequestered by receptor mediated endocytosis into growing oocytes, where it is generally cleaved, giving rise to the respective yolk components composed of complex suite of small cleavage products.

Precursor of the major egg-yolk proteins that are sources of nutrients during early development of oviparous organisms. The polypeptide is Vitellogenin-1 (vtg1) (Fundulus heteroclitus (Killifish)).